Reading from the N-terminus, the 904-residue chain is Patched domain-containing protein 4 (904 aa).

Residues 41–61 (HPVFFLTVPAVLTITFGLSAL) traverse the membrane as a helical segment. N-linked (GlcNAc...) asparagine glycosylation occurs at Asn-149. In terms of domain architecture, SSD spans 291–450 (TRSKVLVSLV…FSFFGSCLVF (160 aa)). The next 6 helical transmembrane spans lie at 295–312 (VLVSLVLILTTATLSSSM), 323–343 (GLLGVLTVCISIATAAGIFFI), 351–371 (TLLGIPFFAMGHGTKGVFELL), 394–414 (VMVTYTMTSSLYFITFGMGAS), 431–451 (VSILLNYFYIFSFFGSCLVFA), and 523–543 (PFVVILYLIYASFSFMGCLQI). Asn-625 carries an N-linked (GlcNAc...) asparagine glycan. The next 3 helical transmembrane spans lie at 718-738 (PVLIAGFGVLLVLILTFFLVI), 744-764 (FWLILSVTSIELGVLGLMTLW), and 771-791 (ISILCLIYTLNFAIDHCAPLL). The N-linked (GlcNAc...) asparagine glycan is linked to Asn-820. A run of 2 helical transmembrane segments spans residues 823 to 843 (SFLIGLLPLLFVPSNLTFTLF) and 845 to 865 (CLLLTGGCTLLHCFVILPVFL).

The protein belongs to the patched family.

The protein localises to the membrane. Its function is as follows. Could act as a repressor of canonical hedgehog signaling by antagonizing the effects of SMO, as suggested by down-regulation of hedgehog target genes, including GLI1, PTCH1, and PTCH2 in PTCHD4-expressing cells. The polypeptide is Patched domain-containing protein 4 (Ptchd4) (Mus musculus (Mouse)).